The following is a 247-amino-acid chain: Probable transcriptional regulatory protein ECA2494 (247 aa).

This sequence belongs to the TACO1 family.

The protein resides in the cytoplasm. The sequence is that of Probable transcriptional regulatory protein ECA2494 from Pectobacterium atrosepticum (strain SCRI 1043 / ATCC BAA-672) (Erwinia carotovora subsp. atroseptica).